The chain runs to 101 residues: NAD(P)H-quinone oxidoreductase subunit 4L, chloroplastic (101 aa).

A run of 3 helical transmembrane segments spans residues 2–22 (MFEH…YGLI), 32–52 (MCLE…SDLF), and 61–81 (IFSI…LAIV).

Belongs to the complex I subunit 4L family. NDH is composed of at least 16 different subunits, 5 of which are encoded in the nucleus.

It localises to the plastid. The protein localises to the chloroplast thylakoid membrane. It catalyses the reaction a plastoquinone + NADH + (n+1) H(+)(in) = a plastoquinol + NAD(+) + n H(+)(out). The catalysed reaction is a plastoquinone + NADPH + (n+1) H(+)(in) = a plastoquinol + NADP(+) + n H(+)(out). Its function is as follows. NDH shuttles electrons from NAD(P)H:plastoquinone, via FMN and iron-sulfur (Fe-S) centers, to quinones in the photosynthetic chain and possibly in a chloroplast respiratory chain. The immediate electron acceptor for the enzyme in this species is believed to be plastoquinone. Couples the redox reaction to proton translocation, and thus conserves the redox energy in a proton gradient. The sequence is that of NAD(P)H-quinone oxidoreductase subunit 4L, chloroplastic from Lemna minor (Common duckweed).